Here is a 257-residue protein sequence, read N- to C-terminus: MYACARTTKINHFRGTSTTQNPNRGLEPSPSSYVTRRSKEKRPINVEKRSHKKRKIICPLEEEPIQTTPPEWLLNVMRREENGYNPKLISTRQLYKTDLKKTEARLSVPFKQVKTPDFLTEDETRIIHENAMKIRDNGVPVNFVDPELNKHVLELRKWKMKGNWIYVFVKGWKNVLDACKTLFKEDDVYPLWSFRSGTGKLCFALTPKNSGRGNSLPGGDGASTSGESGQVPLPIPPARYSSNSGQGCSGESSSSSS.

A disordered region spans residues 5 to 50; that stretch reads ARTTKINHFRGTSTTQNPNRGLEPSPSSYVTRRSKEKRPINVEKRS. Residues 8–35 are compositionally biased toward polar residues; the sequence is TKINHFRGTSTTQNPNRGLEPSPSSYVT. The segment at residues 115-209 is a DNA-binding region (TF-B3); that stretch reads TPDFLTEDET…KLCFALTPKN (95 aa). The tract at residues 212-257 is disordered; it reads RGNSLPGGDGASTSGESGQVPLPIPPARYSSNSGQGCSGESSSSSS. The segment covering 241 to 257 has biased composition (low complexity); it reads SSNSGQGCSGESSSSSS.

The protein resides in the nucleus. This is Putative B3 domain-containing protein At2g27410 from Arabidopsis thaliana (Mouse-ear cress).